Here is a 174-residue protein sequence, read N- to C-terminus: Transcription factor bHLH36 (174 aa).

Positions 1–53 (MEKMMHRETERQRRQEMASLYASLRSLLPLHFIKGKRSTSDQVNEAVNYIKYL) constitute a bHLH domain.

In terms of assembly, homodimer. As to expression, expressed constitutively in roots, leaves, stems, and flowers.

It is found in the nucleus. The protein is Transcription factor bHLH36 (BHLH36) of Arabidopsis thaliana (Mouse-ear cress).